The following is a 166-amino-acid chain: MAPSTVAVEMLSPKEKNRLRKPVVEKMRRDRINSSIEQLKLLLEQEFARHQPNSKLEKADILEMAVSYLKHSKAFAAAAGPKSLHQDYSEGYSWCLQEAVQFLTLHAASDTQMKLLYHFQRPPAPAAPVKETPTPGAAPQPARSSTKAAASVSTSRQSACGLWRPW.

The bHLH domain occupies 16–72 (KNRLRKPVVEKMRRDRINSSIEQLKLLLEQEFARHQPNSKLEKADILEMAVSYLKHS). Residues 88–119 (YSEGYSWCLQEAVQFLTLHAASDTQMKLLYHF) enclose the Orange domain. Residues 125 to 166 (PAAPVKETPTPGAAPQPARSSTKAAASVSTSRQSACGLWRPW) form a disordered region. The segment covering 142-156 (ARSSTKAAASVSTSR) has biased composition (low complexity). The WRPW motif motif lies at 163–166 (WRPW).

Transcription repression requires formation of a complex with a corepressor protein of the Groucho/TLE family. Expressed predominantly in embryonic neural lineage cells.

The protein resides in the nucleus. Functionally, transcriptional repressor of genes that require a bHLH protein for their transcription. Plays an important role as neurogenesis negative regulator. The chain is Transcription factor HES-5 (Hes5) from Rattus norvegicus (Rat).